A 329-amino-acid chain; its full sequence is Oxidoreductase sirO (329 aa).

Asp-54 provides a ligand contact to NADP(+). The active-site Proton donor is the Tyr-59. Substrate is bound at residue His-118. NADP(+)-binding positions include 148–149, Gln-174, 203–213, and 288–296; these read SN, SPLCCGLLINA, and SSARQLEES.

The protein belongs to the aldo/keto reductase family. Aldo/keto reductase 2 subfamily.

The protein operates within mycotoxin biosynthesis. Its function is as follows. Oxidoreductase; part of the gene cluster that mediates the biosynthesis of sirodesmin PL, an epipolythiodioxopiperazine (ETP) characterized by a disulfide bridged cyclic dipeptide and that acts as a phytotoxin which is involved in the blackleg didease of canola. SirD catalyzes the O-prenylation of L-tyrosine (L-Tyr) in the presence of dimethylallyl diphosphate (DMAPP) to yield 4-O-dimethylallyl-L-Tyr, and therefore represents probably the first pathway-specific enzyme in the biosynthesis of sirodesmin PL. 4-O-dimethylallyl-L-Tyr, then undergoes condensation with L-Ser in a reaction catalyzed by the non-ribosomal peptide synthase sirP to form the diketopiperazine (DKP) backbone. Further bishydroxylation of the DKP performed by the cytochrome P450 monooxygenase sirC leads to the production of the intermediate phomamide. This step is essential to form the reactive thiol group required for toxicity of sirodesmin PL. The next steps of sirodesmin biosynthesis are not well understood yet, but some predictions could be made from intermediate compounds identification. Phomamide is converted into phomalizarine via oxidation, probably by sirT. Further oxidation, methylation (by sirM or sirN) and reduction steps convert phomalizarine to deacetyl sirodesmin. Finally, acetyltransferase sirH probably acetylates deacetyl sirodesmin to produce sirodesmin PL. This Leptosphaeria maculans (Blackleg fungus) protein is Oxidoreductase sirO.